Reading from the N-terminus, the 378-residue chain is Wnt inhibitory factor 1 (378 aa).

A signal peptide spans Met-1 to Tyr-28. Residues Met-36 to Cys-175 form the WIF domain. Asn-86 is a glycosylation site (N-linked (GlcNAc...) asparagine). Intrachain disulfides connect Cys-138–Cys-175, Cys-180–Cys-190, Cys-184–Cys-196, Cys-212–Cys-222, Cys-216–Cys-228, and Cys-230–Cys-239. 5 consecutive EGF-like domains span residues Gln-176–Val-205, Glu-208–Glu-240, Asn-243–Glu-272, Glu-272–Ser-304, and Lys-305–Asn-336. A glycan (N-linked (GlcNAc...) asparagine) is linked at Asn-243. Intrachain disulfides connect Cys-244–Cys-254, Cys-248–Cys-260, Cys-262–Cys-271, Cys-276–Cys-286, Cys-280–Cys-292, Cys-294–Cys-303, Cys-308–Cys-318, Cys-312–Cys-324, and Cys-326–Cys-335. Positions Val-343–Val-378 are disordered. The segment covering Glu-367–Val-378 has biased composition (polar residues).

Highly expressed in unsegmented paraxial mesoderm.

It is found in the secreted. Functionally, binds to WNT proteins and inhibits their activities. May be involved in mesoderm segmentation. The protein is Wnt inhibitory factor 1 (wif1) of Danio rerio (Zebrafish).